The following is a 784-amino-acid chain: Toll-like receptor 2 (784 aa).

An N-terminal signal peptide occupies residues 1-20; that stretch reads MPRALWTAWVWAVIILSTEG. At 21–587 the chain is on the extracellular side; the sequence is ASDQASSLSC…ARLSLSECHR (567 aa). Cysteines 30 and 36 form a disulfide. 19 LRR repeats span residues 54 to 77, 78 to 101, 102 to 125, 126 to 150, 151 to 175, 176 to 199, 200 to 223, 224 to 250, 251 to 278, 279 to 308, 309 to 337, 338 to 361, 362 to 388, 389 to 414, 415 to 437, 438 to 457, 458 to 478, 479 to 500, and 501 to 524; these read VKSLDLSNNEITYVSNRDLQRCVN, LKTLRLGANEIHTVEEDSFFHLRN, LEYLDLSYNRLSNLSSSWFRSLYV, LKFLNLLGNLYKTLGETSLFSHLPN, LRTLKVGNSNSFTEIHEKDFTGLTF, LEELEISAQNLQIYVPKSLKSIQN, ISHLILHLKQPVLLVDILVDIVSS, LDCLELRDTNLHTFHFSEASISEMSTS, VKKLIFRNVQFTDESFVEVVKLFNYVSG, ILEVEFDDCTHDGIGDFRALSLDRIRHLGN, VETLTIRKLHIPQFFLFQDLSSIYPLTGK, VKRVTIENSKVFLVPCLLSQHLKS, LEYLDLSENLMSEETLKNSACKDAWPF, LQTLVLRQNRLKSLEKXGELLLTLEN, LNSLDISKNNFLSMPETCQWPGK, MKQLNLSSTRIHSLTQCLPQ, TLEILDVSNNNLDSFSLILPQ, LKELYISRNKLKTLPDASFLPV, and LXVMRISRNIINTFSKEQLDSFQQ. An N-linked (GlcNAc...) asparagine glycan is attached at asparagine 114. Residue asparagine 199 is glycosylated (N-linked (GlcNAc...) asparagine). A disulfide bridge connects residues cysteine 353 and cysteine 382. A disulfide bridge links cysteine 432 with cysteine 454. An N-linked (GlcNAc...) asparagine glycan is attached at asparagine 442. An LRRCT domain is found at 525-579; sequence LKTLEAGGNNFICSCDFLSFTQGQQALGRVLVDWPDDYHCDSPSHVRGQRVQDAR. The chain crosses the membrane as a helical span at residues 588–608; the sequence is AAVVSAACCALFLLLLLMGVL. Topologically, residues 609-784 are cytoplasmic; the sequence is CHRFHGLWYM…WLNLRAAIRS (176 aa). Residues 639–782 form the TIR domain; it reads ICYDAFVSYS…GFWLNLRAAI (144 aa). Lysine 754 participates in a covalent cross-link: Glycyl lysine isopeptide (Lys-Gly) (interchain with G-Cter in ubiquitin). An ATG16L1-binding motif motif is present at residues 761-778; the sequence is YLEWPVDETQQEGFWLNL.

This sequence belongs to the Toll-like receptor family. Interacts with LY96, TLR1 and TLR6 (via extracellular domain). TLR2 seems to exist in heterodimers with either TLR1 or TLR6 before stimulation by the ligand. The heterodimers form bigger oligomers in response to their corresponding ligands as well as further heterotypic associations with other receptors such as CD14 and/or CD36. Binds MYD88 (via TIR domain). Interacts with TICAM1. Interacts with CNPY3. Interacts with ATG16L1. Interacts with PPP1R11. Interacts with TICAM2. Interacts with TIRAP. Post-translationally, ubiquitinated at Lys-754 by PPP1R11, leading to its degradation. Deubiquitinated by USP2. In terms of processing, glycosylation of Asn-442 is critical for secretion of the N-terminal ectodomain of TLR2.

It localises to the membrane. Its subcellular location is the cytoplasmic vesicle. The protein resides in the phagosome membrane. It is found in the membrane raft. Functionally, cooperates with LY96 to mediate the innate immune response to bacterial lipoproteins and other microbial cell wall components. Cooperates with TLR1 or TLR6 to mediate the innate immune response to bacterial lipoproteins or lipopeptides. Acts via MYD88 and TRAF6, leading to NF-kappa-B activation, cytokine secretion and the inflammatory response. May also promote apoptosis in response to lipoproteins. Forms activation clusters composed of several receptors depending on the ligand, these clusters trigger signaling from the cell surface and subsequently are targeted to the Golgi in a lipid-raft dependent pathway. Forms the cluster TLR2:TLR6:CD14:CD36 in response to diacylated lipopeptides and TLR2:TLR1:CD14 in response to triacylated lipopeptides. The polypeptide is Toll-like receptor 2 (TLR2) (Bos indicus (Zebu)).